Reading from the N-terminus, the 487-residue chain is Probable nuclear hormone receptor HR3 (487 aa).

The segment at residues 48–123 (IIPCKVCGDK…LGMSRDAVKF (76 aa)) is a DNA-binding region (nuclear receptor). 2 NR C4-type zinc fingers span residues 51 to 71 (CKVCGDKSSGVHYGVITCEGC) and 87 to 111 (CPRNKQCVVDRVNRNRCQYCRLQKC). The interval 145 to 176 (MRAQSDAAPDSSVYDTQTPSSSDQLHHNNYNS) is disordered. The span at 157 to 167 (VYDTQTPSSSD) shows a compositional bias: polar residues. The region spanning 237 to 480 (INDVLIKTLA…PALYKELFSI (244 aa)) is the NR LBD domain.

It belongs to the nuclear hormone receptor family. NR1 subfamily.

The protein resides in the nucleus. Its function is as follows. Putative receptor whose ligand is not yet known. This chain is Probable nuclear hormone receptor HR3, found in Drosophila melanogaster (Fruit fly).